We begin with the raw amino-acid sequence, 236 residues long: Ureidoacrylate amidohydrolase RutB (236 aa).

Residue D24 is the Proton acceptor of the active site. K133 is a catalytic residue. C166 (nucleophile) is an active-site residue.

This sequence belongs to the isochorismatase family. RutB subfamily.

The enzyme catalyses (Z)-3-ureidoacrylate + H2O + H(+) = (Z)-3-aminoacrylate + NH4(+) + CO2. It catalyses the reaction (Z)-3-ureidoacrylate + H2O = (Z)-3-aminoacrylate + carbamate + H(+). It carries out the reaction (Z)-2-methylureidoacrylate + H2O + H(+) = (Z)-2-methylaminoacrylate + NH4(+) + CO2. Hydrolyzes ureidoacrylate to form aminoacrylate and carbamate. The carbamate hydrolyzes spontaneously, thereby releasing one of the nitrogen atoms of the pyrimidine ring as ammonia and one of its carbon atoms as CO2. In Klebsiella pneumoniae (strain 342), this protein is Ureidoacrylate amidohydrolase RutB.